The primary structure comprises 381 residues: Creatine kinase M-type (381 aa).

A Phosphagen kinase N-terminal domain is found at 11 to 98; it reads KLNYSAAEEF…FDPVIEDRHG (88 aa). One can recognise a Phosphagen kinase C-terminal domain in the interval 125-367; it reads YVLSSRVRTG…KLMVEMEKRL (243 aa). ATP contacts are provided by residues 128-132, histidine 191, arginine 236, arginine 292, 320-325, and aspartate 335; these read SSRVR and RGTGGV.

This sequence belongs to the ATP:guanido phosphotransferase family. In terms of assembly, dimer of identical or non-identical chains. With MM being the major form in skeletal muscle and myocardium, MB existing in myocardium, and BB existing in many tissues, especially brain.

It localises to the cytoplasm. The catalysed reaction is creatine + ATP = N-phosphocreatine + ADP + H(+). In terms of biological role, reversibly catalyzes the transfer of phosphate between ATP and various phosphogens (e.g. creatine phosphate). Creatine kinase isoenzymes play a central role in energy transduction in tissues with large, fluctuating energy demands, such as skeletal muscle, heart, brain and spermatozoa. The polypeptide is Creatine kinase M-type (Tetronarce californica (Pacific electric ray)).